Reading from the N-terminus, the 1153-residue chain is Integrin alpha-M (1153 aa).

The first 16 residues, 1-16 (MTLKALLVTALALCHG), serve as a signal peptide directing secretion. Over 17–1105 (FNLDTEHPMT…TKVEPYEVHN (1089 aa)) the chain is Extracellular. FG-GAP repeat units follow at residues 18–75 (NLDT…RCHP) and 76–135 (IPLQ…RPPQ). The N-linked (GlcNAc...) asparagine glycan is linked to asparagine 58. A disulfide bridge connects residues cysteine 66 and cysteine 73. Asparagine 86 is a glycosylation site (N-linked (GlcNAc...) asparagine). A disulfide bridge connects residues cysteine 105 and cysteine 123. One can recognise a VWFA domain in the interval 164–338 (IDFQKMKEFV…QEKIFAIEGT (175 aa)). 5 FG-GAP repeats span residues 339-390 (QTGS…VTFI), 391-442 (NTTR…FGTW), 443-503 (EPHT…RARW), 506-564 (EALL…ASLS), and 569-629 (HRII…FSPK). Residue asparagine 391 is glycosylated (N-linked (GlcNAc...) asparagine). Ca(2+)-binding residues include aspartate 465, aspartate 467, aspartate 469, asparagine 471, asparagine 473, aspartate 529, asparagine 531, aspartate 533, aspartate 537, aspartate 592, aspartate 596, and aspartate 600. The cysteines at positions 654 and 711 are disulfide-linked. N-linked (GlcNAc...) asparagine glycosylation is found at asparagine 696, asparagine 734, asparagine 772, asparagine 801, asparagine 881, asparagine 907, asparagine 941, asparagine 980, asparagine 994, and asparagine 1022. A disulfide bridge links cysteine 770 with cysteine 776. 2 disulfide bridges follow: cysteine 999-cysteine 1023 and cysteine 1028-cysteine 1033. N-linked (GlcNAc...) asparagine glycosylation is found at asparagine 1045, asparagine 1051, and asparagine 1076. Residues 1106–1129 (PVPLIVGSSIGGLVLLALITAGLY) form a helical membrane-spanning segment. The Cytoplasmic portion of the chain corresponds to 1130–1153 (KLGFFKRQYKDMMNEAAPQDAPPQ). A GFFKR motif motif is present at residues 1132–1136 (GFFKR).

This sequence belongs to the integrin alpha chain family. In terms of assembly, heterodimer of an alpha and a beta subunit. ITGAM associates with ITGB2. Found in a complex with CD177 and ITGB2/CD18. Interacts with JAM3. Interacts with THBD. Interacts with complement factor H/CFH; this interaction mediates adhesion of neutrophils to pathogens leading to pathogen clearance. Interacts with TMEM268; this interaction inhibits ITGAM degradation via the endosome-lysosome pathway. Predominantly expressed in monocytes and granulocytes. Expressed in a subset of peritoneal mast cells. Expressed in microglia (at protein level).

Its subcellular location is the cell membrane. The protein resides in the membrane raft. Integrin ITGAM/ITGB2 is implicated in various adhesive interactions of monocytes, macrophages and granulocytes as well as in mediating the uptake of complement-coated particles and pathogens. It is identical with CR-3, the receptor for the iC3b fragment of the third complement component. It probably recognizes the R-G-D peptide in C3b. Integrin ITGAM/ITGB2 is also a receptor for fibrinogen, factor X and ICAM1. It recognizes P1 and P2 peptides of fibrinogen gamma chain. Regulates neutrophil migration. In association with beta subunit ITGB2/CD18, required for CD177-PRTN3-mediated activation of TNF primed neutrophils. May regulate phagocytosis-induced apoptosis in extravasated neutrophils. May play a role in mast cell development. Required with TYROBP/DAP12 in microglia to control production of microglial superoxide ions which promote the neuronal apoptosis that occurs during brain development. The protein is Integrin alpha-M (Itgam) of Mus musculus (Mouse).